The chain runs to 68 residues: Putative membrane protein insertion efficiency factor (68 aa).

The protein belongs to the UPF0161 family.

Its subcellular location is the cell inner membrane. In terms of biological role, could be involved in insertion of integral membrane proteins into the membrane. This chain is Putative membrane protein insertion efficiency factor, found in Persephonella marina (strain DSM 14350 / EX-H1).